Reading from the N-terminus, the 500-residue chain is Lysine--tRNA ligase (500 aa).

Mg(2+) contacts are provided by Glu-410 and Glu-417.

Belongs to the class-II aminoacyl-tRNA synthetase family. As to quaternary structure, homodimer. Requires Mg(2+) as cofactor.

It is found in the cytoplasm. It catalyses the reaction tRNA(Lys) + L-lysine + ATP = L-lysyl-tRNA(Lys) + AMP + diphosphate. In Shewanella putrefaciens (strain CN-32 / ATCC BAA-453), this protein is Lysine--tRNA ligase.